The following is a 642-amino-acid chain: MNIVKLQRKFPILTQEDLFSTIEKFRAIDLDDKGWVEKQQALEAVSKDGDATYDEARETLKHVGVDASGRVELDDYVGLVAKLRESKTGAAPQTTFNVAPNSTPIVSTAATGLQHKGKGTQAKIIVAGSQTGTTHTINEEERREFTKHINSVLAGDQDIGDLLPFPTDTFQLFDECRDGLVLSKLINDSVPDTIDTRVLNWPKKGKELNNFQASENANIVINSAKAIGCVVVNVHSEDIIEGREHLILGLIWQIIRRGLLSKIDIKLHPELYRLLEDDETLEQFLRLPPEQILLRWFNYHLKQANWNRRVTNFSKDVSDGENYTILLNQLDPALCSKAPLQTTDLMERAEQVLQNAEKLDCRKYLTPSSLVAGNPKLNLAFVAHLFNTHPGLEPIQEEEKPEIEEFDAEGEREARVFTLWLNSLDVDPPVISLFDDLKDGLILLQAYEKVMPGAVDFKHVNKRPASGAEISRFKALENTNYAVDLGRAKGFSLVGIEGSDIVDGNKLLTLGLVWQLMRRNISITMKTLSSSGRDMSDSQILKWAQDQVTKGGKNSTIRSFKDQALSNAHFLLDVLNGIAPGYVDYDLVTPGNTEEERYANARLAISIARKLGALIWLVPEDINEVRARLIITFIASLMTLNK.

EF-hand domains follow at residues 16-50 (EDLF…KDGD) and 51-86 (ATYD…LRES). 7 residues coordinate Ca(2+): Asp-29, Asp-31, Trp-35, Asp-66, Ser-68, Arg-70, and Asp-75. Actin-binding stretches follow at residues 125–394 (IVAG…GLEP) and 395–642 (IQEE…TLNK). 4 Calponin-homology (CH) domains span residues 139-259 (EEER…RRGL), 287-390 (LPPE…NTHP), 411-521 (EREA…RRNI), and 534-642 (DMSD…TLNK).

Its function is as follows. Binds to actin, and functionally associates with actin structures involved in the development and maintenance of cell polarity. The protein is Fimbrin (SAC6) of Saccharomyces cerevisiae (strain ATCC 204508 / S288c) (Baker's yeast).